Consider the following 1202-residue polypeptide: DNA-directed RNA polymerase subunit beta (1202 aa).

Over residues 1151-1162 (LRDMDEEDDDVV) the composition is skewed to acidic residues. A disordered region spans residues 1151–1202 (LRDMDEEDDDVVNVDALSKYAEKQNEKTNASAEEAKAPSTESAPVETKNNQN). A compositionally biased stretch (polar residues) spans 1189–1202 (STESAPVETKNNQN).

It belongs to the RNA polymerase beta chain family. As to quaternary structure, the RNAP catalytic core consists of 2 alpha, 1 beta, 1 beta' and 1 omega subunit. When a sigma factor is associated with the core the holoenzyme is formed, which can initiate transcription.

It carries out the reaction RNA(n) + a ribonucleoside 5'-triphosphate = RNA(n+1) + diphosphate. In terms of biological role, DNA-dependent RNA polymerase catalyzes the transcription of DNA into RNA using the four ribonucleoside triphosphates as substrates. The protein is DNA-directed RNA polymerase subunit beta of Pediococcus pentosaceus (strain ATCC 25745 / CCUG 21536 / LMG 10740 / 183-1w).